The chain runs to 440 residues: Chitinase-like protein Idgf5 (440 aa).

A signal peptide spans 1-27; sequence MRNKMIYFNFHLFVIIFANLQIFQVQA. A GH18 domain is found at 28–439; it reads ANIFCYYDTQ…KSIHNAFKKF (412 aa). A disulfide bridge connects residues Cys32 and Cys56. N-linked (GlcNAc...) asparagine glycans are attached at residues Asn126, Asn283, and Asn403. An intrachain disulfide couples Cys340 to Cys421.

This sequence belongs to the glycosyl hydrolase 18 family. IDGF subfamily. Glycosylated.

The protein resides in the secreted. In terms of biological role, cooperates with insulin-like peptides to stimulate the proliferation, polarization and motility of imaginal disk cells. May act by stabilizing the binding of insulin-like peptides to its receptor through a simultaneous interaction with both molecules to form a multiprotein signaling complex. The polypeptide is Chitinase-like protein Idgf5 (Idgf5) (Glossina morsitans morsitans (Savannah tsetse fly)).